The primary structure comprises 1029 residues: U2 snRNP-associated SURP motif-containing protein (1029 aa).

2 disordered regions span residues 1 to 110 and 141 to 273; these read MADK…KEDE and VNAA…DPST. A2 carries the post-translational modification N-acetylalanine. Residues 7 to 16 show a composition bias toward polar residues; sequence GGSQKASSKN. Basic residues predominate over residues 45–54; it reads TRPKSPRKHN. Basic and acidic residues predominate over residues 55 to 64; it reads YRNESSRESL. A Phosphoserine modification is found at S67. K80 participates in a covalent cross-link: Glycyl lysine isopeptide (Lys-Gly) (interchain with G-Cter in SUMO2). A coiled-coil region spans residues 92 to 121; it reads AKRTLSKKEQEELKKKEDEKAAAEIYEEFL. 2 stretches are compositionally biased toward basic and acidic residues: residues 97–110 and 144–155; these read SKKE…KEDE and AKDEHETDEKRG. Residues K145 and K168 each participate in a glycyl lysine isopeptide (Lys-Gly) (interchain with G-Cter in SUMO2) cross-link. Residues 169–178 show a composition bias toward polar residues; sequence NPPNQSSNER. The span at 186–222 shows a compositional bias: basic and acidic residues; sequence ETKKPPLKKGEKEKKKSNLELFKEELKQIQEERDERH. Residues 192 to 232 are a coiled coil; sequence LKKGEKEKKKSNLELFKEELKQIQEERDERHKTKGRLSRFE. The residue at position 202 (S202) is a Phosphoserine. K208 participates in a covalent cross-link: Glycyl lysine isopeptide (Lys-Gly) (interchain with G-Cter in SUMO2). At S236 the chain carries Phosphoserine. Positions 239–249 are enriched in basic and acidic residues; sequence DGQRRSMDVPS. Residues 274–355 enclose the RRM domain; it reads TNLYLGNINP…FEMKLGWGKA (82 aa). One copy of the SURP motif repeat lies at 430 to 473; it reads LIHRMIEFVVREGPMFEAMIMNREINNPMFRFLFENQTPAHVYY. S485 carries the phosphoserine modification. Positions 534-679 constitute a CID domain; it reads LKEEQRDKLE…KLQNIFLGLV (146 aa). The tract at residues 704–729 is disordered; it reads DGAPLEDVDGIPIDATPIDDLDGVPI. At T719 the chain carries Phosphothreonine. Glycyl lysine isopeptide (Lys-Gly) (interchain with G-Cter in SUMO2) cross-links involve residues K748 and K749. Position 760 is an N6-acetyllysine; alternate (K760). K760 participates in a covalent cross-link: Glycyl lysine isopeptide (Lys-Gly) (interchain with G-Cter in SUMO2); alternate. Disordered regions lie at residues 778–841 and 855–1029; these read KWEL…EEKR and QDEL…KNKH. The segment covering 786–806 has biased composition (acidic residues); it reads EESEEEENQNQEEESEDEEDT. S788, S800, and S811 each carry phosphoserine. Composition is skewed to basic and acidic residues over residues 810 to 841 and 874 to 922; these read KSEE…EEKR and QVEH…TPTR. Glycyl lysine isopeptide (Lys-Gly) (interchain with G-Cter in SUMO2) cross-links involve residues K829 and K832. Residues 837-915 adopt a coiled-coil conformation; that stretch reads SEEKRAKLRE…ESRSKDKKEK (79 aa). Position 931 is a phosphothreonine (T931). Residues S946 and S948 each carry the phosphoserine modification. Residues 950–980 are compositionally biased toward basic and acidic residues; the sequence is KSERSERSERSHKESSRSRSSHKDSPRDASK. A compositionally biased stretch (basic residues) spans 991–1029; that stretch reads TPKRSRRSRSRSPKKSGKKSRSQSRSPHRSHKKSKKNKH.

The protein belongs to the splicing factor SR family. Interacts with ERBB4.

The protein localises to the nucleus. The chain is U2 snRNP-associated SURP motif-containing protein (U2surp) from Mus musculus (Mouse).